A 705-amino-acid polypeptide reads, in one-letter code: 1,4-alpha-glucan branching enzyme GlgB (705 aa).

Asp-393 functions as the Nucleophile in the catalytic mechanism. Glu-446 serves as the catalytic Proton donor.

It belongs to the glycosyl hydrolase 13 family. GlgB subfamily. Monomer.

The catalysed reaction is Transfers a segment of a (1-&gt;4)-alpha-D-glucan chain to a primary hydroxy group in a similar glucan chain.. It participates in glycan biosynthesis; glycogen biosynthesis. Catalyzes the formation of the alpha-1,6-glucosidic linkages in glycogen by scission of a 1,4-alpha-linked oligosaccharide from growing alpha-1,4-glucan chains and the subsequent attachment of the oligosaccharide to the alpha-1,6 position. This Picrophilus torridus (strain ATCC 700027 / DSM 9790 / JCM 10055 / NBRC 100828 / KAW 2/3) protein is 1,4-alpha-glucan branching enzyme GlgB.